The sequence spans 628 residues: Venom redulysin 1 (628 aa).

A signal peptide spans 1–19 (MSKLWLLLLLVAAFQAVHS). A propeptide spanning residues 20-368 (YPAAESDYLE…EDDVAESDEE (349 aa)) is cleaved from the precursor. Positions 290-313 (DYEEEEEEEEEEEFELEEDYEEDP) are disordered. Residues 291–313 (YEEEEEEEEEEEFELEEDYEEDP) show a composition bias toward acidic residues.

It belongs to the redulysin-like family. Contains 5 disulfide bonds. Expressed by the venom gland (posterior main gland) (at protein level).

The protein resides in the secreted. Highly abundant protein that may be responsible for the observed disruption of sensory neuron membranes, since it is homologous to proteins such as trialysin, which forms pores in lipid bilayers. Probable insecticidal toxin. This chain is Venom redulysin 1, found in Platymeris rhadamanthus (Red spot assassin bug).